Reading from the N-terminus, the 227-residue chain is ATP-dependent dethiobiotin synthetase BioD (227 aa).

Position 13 to 18 (13 to 18) interacts with ATP; sequence DIGKTY. Thr-17 provides a ligand contact to Mg(2+). The active site involves Lys-38. Ser-42 serves as a coordination point for substrate. ATP-binding positions include Asp-55, 116–119, and 179–180; these read EGSG and NN. Positions 55 and 116 each coordinate Mg(2+).

This sequence belongs to the dethiobiotin synthetase family. In terms of assembly, homodimer. It depends on Mg(2+) as a cofactor.

It localises to the cytoplasm. It catalyses the reaction (7R,8S)-7,8-diammoniononanoate + CO2 + ATP = (4R,5S)-dethiobiotin + ADP + phosphate + 3 H(+). It functions in the pathway cofactor biosynthesis; biotin biosynthesis; biotin from 7,8-diaminononanoate: step 1/2. In terms of biological role, catalyzes a mechanistically unusual reaction, the ATP-dependent insertion of CO2 between the N7 and N8 nitrogen atoms of 7,8-diaminopelargonic acid (DAPA, also called 7,8-diammoniononanoate) to form a ureido ring. The protein is ATP-dependent dethiobiotin synthetase BioD of Clostridium botulinum (strain Okra / Type B1).